The sequence spans 148 residues: Ribosomal RNA large subunit methyltransferase H (148 aa).

S-adenosyl-L-methionine contacts are provided by residues leucine 62, glycine 94, and 113–118 (LSLLTL).

This sequence belongs to the RNA methyltransferase RlmH family. Homodimer.

The protein resides in the cytoplasm. It carries out the reaction pseudouridine(1915) in 23S rRNA + S-adenosyl-L-methionine = N(3)-methylpseudouridine(1915) in 23S rRNA + S-adenosyl-L-homocysteine + H(+). In terms of biological role, specifically methylates the pseudouridine at position 1915 (m3Psi1915) in 23S rRNA. The protein is Ribosomal RNA large subunit methyltransferase H of Deinococcus geothermalis (strain DSM 11300 / CIP 105573 / AG-3a).